A 146-amino-acid polypeptide reads, in one-letter code: MNSLSIFFIVVATAAVCLLFIQGYSIYENYGNIKEFNATHAAFEYSKSIGGTPALDRRVQDVNDTISDVKQKWRCVVYPGNGFVSASIFGFQAEVGPNNTRSIRKFNTMQQCIDFTFSDVININIYNPCVVPNINNAECQFLKSVL.

A helical; Signal-anchor for type III membrane protein transmembrane segment spans residues 1–21; it reads MNSLSIFFIVVATAAVCLLFI. Residues 22-146 lie on the Intravirion side of the membrane; sequence QGYSIYENYG…AECQFLKSVL (125 aa).

It belongs to the orthopoxvirus OPG155 protein family. In terms of assembly, part of a stable entry-fusion complex (EFC) which is at least composed of proteins OPG143, OPG147, OPG155, OPG086, OPG094, OPG107, OPG104, and OPG099. Formation of the viral membrane is necessary for the assembly of the complex. Interacts directly with protein OPG107. In terms of processing, contains two intramolecular disulfide bonds. They are created by the viral disulfide bond formation pathway, a poxvirus-specific pathway that operates on the cytoplasmic side of the MV membranes.

It is found in the virion membrane. Its function is as follows. Envelope protein required for virus entry into host cell and for cell-cell fusion (syncytium formation). This chain is Envelope protein OPG155 (OPG155), found in Vaccinia virus (strain Ankara) (VACV).